The primary structure comprises 293 residues: Acetylglutamate kinase (293 aa).

Substrate-binding positions include 67 to 68, Arg-89, and Asn-190; that span reads GG.

Belongs to the acetylglutamate kinase family. ArgB subfamily.

The protein localises to the cytoplasm. It carries out the reaction N-acetyl-L-glutamate + ATP = N-acetyl-L-glutamyl 5-phosphate + ADP. It functions in the pathway amino-acid biosynthesis; L-arginine biosynthesis; N(2)-acetyl-L-ornithine from L-glutamate: step 2/4. Functionally, catalyzes the ATP-dependent phosphorylation of N-acetyl-L-glutamate. The protein is Acetylglutamate kinase of Nitrosospira multiformis (strain ATCC 25196 / NCIMB 11849 / C 71).